A 289-amino-acid polypeptide reads, in one-letter code: Thymidylate synthase (289 aa).

DUMP is bound by residues arginine 21 and 150–151 (RR). The Nucleophile role is filled by cysteine 170. DUMP contacts are provided by residues 191–194 (RSGD), asparagine 202, and 232–234 (HIY). Aspartate 194 serves as a coordination point for (6R)-5,10-methylene-5,6,7,8-tetrahydrofolate. Alanine 288 contacts (6R)-5,10-methylene-5,6,7,8-tetrahydrofolate.

Belongs to the thymidylate synthase family. Bacterial-type ThyA subfamily. As to quaternary structure, homodimer.

Its subcellular location is the cytoplasm. It carries out the reaction dUMP + (6R)-5,10-methylene-5,6,7,8-tetrahydrofolate = 7,8-dihydrofolate + dTMP. Its pathway is pyrimidine metabolism; dTTP biosynthesis. Catalyzes the reductive methylation of 2'-deoxyuridine-5'-monophosphate (dUMP) to 2'-deoxythymidine-5'-monophosphate (dTMP) while utilizing 5,10-methylenetetrahydrofolate (mTHF) as the methyl donor and reductant in the reaction, yielding dihydrofolate (DHF) as a by-product. This enzymatic reaction provides an intracellular de novo source of dTMP, an essential precursor for DNA biosynthesis. The sequence is that of Thymidylate synthase from Mycoplasmopsis synoviae (strain 53) (Mycoplasma synoviae).